A 292-amino-acid chain; its full sequence is MPQHDQLHRYLFENFAVRGELVTVSETLQQILDNHNYPQPVKTVLAELLVATSLLTATLKFAGDITVQLQGDGPLSLAVINGNNQQQMRGVARVQGDIPDNADLKTLVGNGYLVITITPEEGERYQGVVGLEGDTLAACLEDYFLRSEQLPTRLFIRTGDVDGKPAAGGMLLQVMPAQNAQAEDFDHLAMLTETIKSEELLTLPANDVLWRLYHEEEVTLYDPQNVEFKCTCSRERCAGALKTLPDEEVDSILAEEGEIDMHCDYCGNHYLFNAMDIAEIRNNASPADPQVH.

Cystine bridges form between cysteine 230–cysteine 232 and cysteine 263–cysteine 266.

It belongs to the HSP33 family. In terms of processing, under oxidizing conditions two disulfide bonds are formed involving the reactive cysteines. Under reducing conditions zinc is bound to the reactive cysteines and the protein is inactive.

It is found in the cytoplasm. Functionally, redox regulated molecular chaperone. Protects both thermally unfolding and oxidatively damaged proteins from irreversible aggregation. Plays an important role in the bacterial defense system toward oxidative stress. The protein is 33 kDa chaperonin of Salmonella typhimurium (strain LT2 / SGSC1412 / ATCC 700720).